The chain runs to 353 residues: tRNA N6-adenosine threonylcarbamoyltransferase (353 aa).

The Fe cation site is built by histidine 109 and histidine 113. Substrate is bound by residues 136-140 (TVSGG), aspartate 169, glycine 182, aspartate 186, and asparagine 284. Aspartate 312 contributes to the Fe cation binding site.

It belongs to the KAE1 / TsaD family. Requires Fe(2+) as cofactor.

The protein resides in the cytoplasm. It catalyses the reaction L-threonylcarbamoyladenylate + adenosine(37) in tRNA = N(6)-L-threonylcarbamoyladenosine(37) in tRNA + AMP + H(+). Required for the formation of a threonylcarbamoyl group on adenosine at position 37 (t(6)A37) in tRNAs that read codons beginning with adenine. Is involved in the transfer of the threonylcarbamoyl moiety of threonylcarbamoyl-AMP (TC-AMP) to the N6 group of A37, together with TsaE and TsaB. TsaD likely plays a direct catalytic role in this reaction. The sequence is that of tRNA N6-adenosine threonylcarbamoyltransferase from Chlorobium phaeobacteroides (strain DSM 266 / SMG 266 / 2430).